The sequence spans 530 residues: Autoinducer-2 kinase (530 aa).

It belongs to the FGGY kinase family.

The protein resides in the cytoplasm. The catalysed reaction is (S)-4,5-dihydroxypentane-2,3-dione + ATP = (2S)-2-hydroxy-3,4-dioxopentyl phosphate + ADP + H(+). Catalyzes the phosphorylation of autoinducer-2 (AI-2) to phospho-AI-2, which subsequently inactivates the transcriptional regulator LsrR and leads to the transcription of the lsr operon. Phosphorylates the ring-open form of (S)-4,5-dihydroxypentane-2,3-dione (DPD), which is the precursor to all AI-2 signaling molecules, at the C5 position. This is Autoinducer-2 kinase from Enterobacter sp. (strain 638).